The primary structure comprises 231 residues: L-ribulose-5-phosphate 4-epimerase (231 aa).

Substrate is bound by residues 27–28 (GN), 44–45 (SG), and 73–74 (SS). The Zn(2+) site is built by aspartate 75, histidine 94, and histidine 96. Aspartate 119 acts as the Proton donor/acceptor in catalysis. A Zn(2+)-binding site is contributed by histidine 168. Catalysis depends on tyrosine 226, which acts as the Proton donor/acceptor.

Belongs to the aldolase class II family. AraD/FucA subfamily. Requires Zn(2+) as cofactor.

It carries out the reaction L-ribulose 5-phosphate = D-xylulose 5-phosphate. Its pathway is carbohydrate degradation; L-arabinose degradation via L-ribulose; D-xylulose 5-phosphate from L-arabinose (bacterial route): step 3/3. Involved in the degradation of L-arabinose. Catalyzes the interconversion of L-ribulose 5-phosphate (LRu5P) and D-xylulose 5-phosphate (D-Xu5P) via a retroaldol/aldol mechanism (carbon-carbon bond cleavage analogous to a class II aldolase reaction). This Halalkalibacterium halodurans (strain ATCC BAA-125 / DSM 18197 / FERM 7344 / JCM 9153 / C-125) (Bacillus halodurans) protein is L-ribulose-5-phosphate 4-epimerase (araD).